A 329-amino-acid polypeptide reads, in one-letter code: DNA-directed RNA polymerase subunit alpha (329 aa).

Residues 1–235 are alpha N-terminal domain (alpha-NTD); sequence MQGSVTEFLK…EQLEAFVDLR (235 aa). The interval 249-329 is alpha C-terminal domain (alpha-CTD); the sequence is FDPILLRPVD…NWPPASIADE (81 aa).

It belongs to the RNA polymerase alpha chain family. In terms of assembly, homodimer. The RNAP catalytic core consists of 2 alpha, 1 beta, 1 beta' and 1 omega subunit. When a sigma factor is associated with the core the holoenzyme is formed, which can initiate transcription.

The catalysed reaction is RNA(n) + a ribonucleoside 5'-triphosphate = RNA(n+1) + diphosphate. DNA-dependent RNA polymerase catalyzes the transcription of DNA into RNA using the four ribonucleoside triphosphates as substrates. This is DNA-directed RNA polymerase subunit alpha from Enterobacter sp. (strain 638).